A 39-amino-acid chain; its full sequence is Natriuretic peptide CnNP-b (39 aa).

Residues 1–8 constitute a propeptide that is removed on maturation; it reads SGSKTATK. The cysteines at positions 12 and 28 are disulfide-linked. The disordered stretch occupies residues 20–39; that stretch reads IGSTSGMGCGGVPKPTPGGS.

The protein belongs to the natriuretic peptide family. As to expression, expressed by the venom gland.

It localises to the secreted. In terms of biological role, snake venom natriuretic peptide that targets both NPR1 and NPR2. Exhibits hypotensive and vasodepressor activities. The polypeptide is Natriuretic peptide CnNP-b (Cryptophis nigrescens (Eastern small-eyed snake)).